Consider the following 632-residue polypeptide: Actin-related protein 8 (632 aa).

Basic and acidic residues predominate over residues 1–30 (MTQAEREQENGKEKEKEREKEKEKEKEQRG). Residues 1–43 (MTQAEREQENGKEKEKEREKEKEKEKEQRGIKRPIAPPVIPEP) form a disordered region. 288–291 (DVGD) is an ATP binding site. Disordered stretches follow at residues 410-429 (MTSL…DEHY) and 434-494 (QSKQ…GGAE). The span at 434–443 (QSKQDQSSKA) shows a compositional bias: low complexity.

Belongs to the actin family. ARP8 subfamily. Component of the chromatin remodeling INO80 complex; specifically part of a complex module associated with the DBINO domain of INO80. Exists as monomers and dimers, but the dimer is most probably the biologically relevant form required for stable interactions with histones that exploits the twofold symmetry of the nucleosome core.

It is found in the nucleus. The protein localises to the chromosome. Functionally, plays an important role in the functional organization of mitotic chromosomes. Exhibits low basal ATPase activity, and unable to polymerize. Proposed core component of the chromatin remodeling INO80 complex which is involved in transcriptional regulation, DNA replication and probably DNA repair. Required for the recruitment of INO80 (and probably the INO80 complex) to sites of DNA damage Strongly prefer nucleosomes and H3-H4 tetramers over H2A-H2B dimers, suggesting it may act as a nucleosome recognition module within the complex. The sequence is that of Actin-related protein 8 (actr8) from Salmo salar (Atlantic salmon).